We begin with the raw amino-acid sequence, 293 residues long: Formamidopyrimidine-DNA glycosylase (293 aa).

Proline 2 serves as the catalytic Schiff-base intermediate with DNA. The Proton donor role is filled by glutamate 3. Residue lysine 60 is the Proton donor; for beta-elimination activity of the active site. Positions 110, 129, and 174 each coordinate DNA. An FPG-type zinc finger spans residues 259–293; it reads NVYRRTGKECRKCGNLIERKKISGRSTHWCPKCQK. Arginine 283 serves as the catalytic Proton donor; for delta-elimination activity.

It belongs to the FPG family. In terms of assembly, monomer. The cofactor is Zn(2+).

It catalyses the reaction Hydrolysis of DNA containing ring-opened 7-methylguanine residues, releasing 2,6-diamino-4-hydroxy-5-(N-methyl)formamidopyrimidine.. The catalysed reaction is 2'-deoxyribonucleotide-(2'-deoxyribose 5'-phosphate)-2'-deoxyribonucleotide-DNA = a 3'-end 2'-deoxyribonucleotide-(2,3-dehydro-2,3-deoxyribose 5'-phosphate)-DNA + a 5'-end 5'-phospho-2'-deoxyribonucleoside-DNA + H(+). Functionally, involved in base excision repair of DNA damaged by oxidation or by mutagenic agents. Acts as a DNA glycosylase that recognizes and removes damaged bases. Has a preference for oxidized purines, such as 7,8-dihydro-8-oxoguanine (8-oxoG). Has AP (apurinic/apyrimidinic) lyase activity and introduces nicks in the DNA strand. Cleaves the DNA backbone by beta-delta elimination to generate a single-strand break at the site of the removed base with both 3'- and 5'-phosphates. The polypeptide is Formamidopyrimidine-DNA glycosylase (Prochlorococcus marinus (strain MIT 9215)).